A 310-amino-acid polypeptide reads, in one-letter code: Olfactory receptor 8B8 (310 aa).

The Extracellular portion of the chain corresponds to 1 to 27; it reads MATENASVPEFILAGLTDQPGLRMPLF. The N-linked (GlcNAc...) asparagine glycan is linked to asparagine 5. Residues 28–48 traverse the membrane as a helical segment; it reads FLFLGFYMVTMVGNLGLITLI. Topologically, residues 49–55 are cytoplasmic; the sequence is GLNSHLH. The helical transmembrane segment at 56–76 threads the bilayer; sequence TPMYFFLFNLSLIDFCYSTVI. Topologically, residues 77–98 are extracellular; sequence TPKMLVSFVSKKNIISYSGCMT. Cysteine 96 and cysteine 188 are oxidised to a cystine. The helical transmembrane segment at 99 to 119 threads the bilayer; the sequence is QLFFFLFFVVSESFILSAMAY. Topologically, residues 120–140 are cytoplasmic; it reads DRYVAICNPLMYTVTMSPQVC. The helical transmembrane segment at 141–161 threads the bilayer; the sequence is LLLLLGVYVMGFAGAMAHTAF. The Extracellular segment spans residues 162–195; it reads MVKLTFCADKLVNHYMCDILPLLERSCTSTYVNE. The chain crosses the membrane as a helical span at residues 196-216; the sequence is LVVFIVVGIDIGVPTVTIFIS. The Cytoplasmic segment spans residues 217-238; sequence YALILSSILRISSTEGRSKAFS. A helical transmembrane segment spans residues 239–259; it reads TCSSHIIAVSLFFGSGAFMYL. Topologically, residues 260-270 are extracellular; the sequence is KPSSLLPMNQG. Residues 271-291 traverse the membrane as a helical segment; the sequence is KVSSLFYTIVVPMLNPLIYSL. At 292 to 310 the chain is on the cytoplasmic side; sequence RNKDVKVALRKTLSRSSFS.

This sequence belongs to the G-protein coupled receptor 1 family.

Its subcellular location is the cell membrane. Functionally, odorant receptor. In Mus musculus (Mouse), this protein is Olfactory receptor 8B8.